A 209-amino-acid polypeptide reads, in one-letter code: Adenylate kinase (209 aa).

10–15 (GAGKGT) lines the ATP pocket. The tract at residues 30-59 (STGDLFRAAIKEQTDLGKKVKAVIDSGALV) is NMP. Residues threonine 31, arginine 36, 57 to 59 (ALV), 85 to 88 (GFPR), and glutamine 92 each bind AMP. Residues 121-158 (GRRVCSSCGQSFHIEFVKPKKEGICDSCSGDLMIRPDD) are LID. Arginine 122 contacts ATP. The Zn(2+) site is built by cysteine 125 and cysteine 128. 131-132 (SF) serves as a coordination point for ATP. Positions 145 and 148 each coordinate Zn(2+). Residues arginine 155 and arginine 166 each coordinate AMP. Proline 194 contacts ATP.

It belongs to the adenylate kinase family. In terms of assembly, monomer.

Its subcellular location is the cytoplasm. It carries out the reaction AMP + ATP = 2 ADP. The protein operates within purine metabolism; AMP biosynthesis via salvage pathway; AMP from ADP: step 1/1. Functionally, catalyzes the reversible transfer of the terminal phosphate group between ATP and AMP. Plays an important role in cellular energy homeostasis and in adenine nucleotide metabolism. In Treponema denticola (strain ATCC 35405 / DSM 14222 / CIP 103919 / JCM 8153 / KCTC 15104), this protein is Adenylate kinase.